The sequence spans 881 residues: Serine/threonine-protein phosphatase BSL1 (881 aa).

Kelch repeat units lie at residues 60–109 (GSSS…AVGT), 269–320 (RLHV…DQDP), and 338–385 (RIYV…PRFS). 2 disordered regions span residues 368–407 (SPLL…LSLD) and 436–464 (AGTL…ANEG). Polar residues-rich tracts occupy residues 374–383 (DRTQQSSTPR) and 445–460 (TSDA…TDGT). Phosphoserine is present on serine 491. Residues 503–522 (VPMNNSDVPQPTKKFTRQKS) are disordered. 4 residues coordinate Mn(2+): aspartate 584, histidine 586, aspartate 618, and asparagine 650. The Proton donor role is filled by histidine 651. The Mn(2+) site is built by histidine 703 and histidine 782. The interval 837–881 (ILSPENSPEHSGDDAWMQELNIQRPPTPTRGRPQPDFDRSSLAYI) is disordered. Residue serine 839 is modified to Phosphoserine.

The protein belongs to the PPP phosphatase family. BSU subfamily. As to quaternary structure, interacts with CDG1 and CDL1. Requires Mn(2+) as cofactor. In terms of tissue distribution, expressed in mature cauline leaves and at the tip of influorescence, including flowers. Expressed at lower level in young tissues relative to older ones.

It localises to the nucleus. The enzyme catalyses O-phospho-L-seryl-[protein] + H2O = L-seryl-[protein] + phosphate. The catalysed reaction is O-phospho-L-threonyl-[protein] + H2O = L-threonyl-[protein] + phosphate. Its function is as follows. Phosphatase involved in elongation process, probably by acting as a regulator of brassinolide signaling. The protein is Serine/threonine-protein phosphatase BSL1 (BSL1) of Arabidopsis thaliana (Mouse-ear cress).